Consider the following 346-residue polypeptide: S-adenosylmethionine:tRNA ribosyltransferase-isomerase (346 aa).

This sequence belongs to the QueA family. Monomer.

It is found in the cytoplasm. It carries out the reaction 7-aminomethyl-7-carbaguanosine(34) in tRNA + S-adenosyl-L-methionine = epoxyqueuosine(34) in tRNA + adenine + L-methionine + 2 H(+). It functions in the pathway tRNA modification; tRNA-queuosine biosynthesis. Its function is as follows. Transfers and isomerizes the ribose moiety from AdoMet to the 7-aminomethyl group of 7-deazaguanine (preQ1-tRNA) to give epoxyqueuosine (oQ-tRNA). The protein is S-adenosylmethionine:tRNA ribosyltransferase-isomerase of Lactococcus lactis subsp. cremoris (strain MG1363).